A 255-amino-acid polypeptide reads, in one-letter code: NADH dehydrogenase [ubiquinone] flavoprotein 2, mitochondrial (255 aa).

The N-terminal 35 residues, 1-35 (MLARLAAKRLLEIRQVFRQPTSQVTRSLSTALNYH), are a transit peptide targeting the mitochondrion. [2Fe-2S] cluster contacts are provided by C130, C135, C171, and C175. The disordered stretch occupies residues 214 to 255 (RKGEKPPHGTQNPKRIKCGPEGGNKTLLGEPKPPQFRDLDAC).

The protein belongs to the complex I 24 kDa subunit family. In terms of assembly, complex I is composed of at least 49 different subunits. This is a component of the flavoprotein-sulfur (FP) fragment of the enzyme. It depends on [2Fe-2S] cluster as a cofactor.

The protein localises to the mitochondrion inner membrane. It carries out the reaction a ubiquinone + NADH + 5 H(+)(in) = a ubiquinol + NAD(+) + 4 H(+)(out). Functionally, core subunit of the mitochondrial membrane respiratory chain NADH dehydrogenase (Complex I) that is believed to belong to the minimal assembly required for catalysis. Complex I functions in the transfer of electrons from NADH to the respiratory chain. The immediate electron acceptor for the enzyme is believed to be ubiquinone. The chain is NADH dehydrogenase [ubiquinone] flavoprotein 2, mitochondrial from Arabidopsis thaliana (Mouse-ear cress).